The primary structure comprises 224 residues: Large ribosomal subunit protein uL3 (224 aa).

Gln159 is subject to N5-methylglutamine.

Belongs to the universal ribosomal protein uL3 family. As to quaternary structure, part of the 50S ribosomal subunit. Forms a cluster with proteins L14 and L19. Methylated by PrmB.

Functionally, one of the primary rRNA binding proteins, it binds directly near the 3'-end of the 23S rRNA, where it nucleates assembly of the 50S subunit. This Janthinobacterium sp. (strain Marseille) (Minibacterium massiliensis) protein is Large ribosomal subunit protein uL3.